Consider the following 444-residue polypeptide: Phosphoglucosamine mutase (444 aa).

Catalysis depends on serine 104, which acts as the Phosphoserine intermediate. Mg(2+) is bound by residues serine 104, aspartate 243, aspartate 245, and aspartate 247. Serine 104 carries the post-translational modification Phosphoserine.

Belongs to the phosphohexose mutase family. The cofactor is Mg(2+). In terms of processing, activated by phosphorylation.

The catalysed reaction is alpha-D-glucosamine 1-phosphate = D-glucosamine 6-phosphate. Catalyzes the conversion of glucosamine-6-phosphate to glucosamine-1-phosphate. The polypeptide is Phosphoglucosamine mutase (Neisseria meningitidis serogroup A / serotype 4A (strain DSM 15465 / Z2491)).